A 609-amino-acid chain; its full sequence is Dynamin-like protein 2 (609 aa).

The segment at methionine 1–threonine 16 is inserts into assembly domain of DLP1, required for tetramerization. The interval tyrosine 17 to phenylalanine 25 is linker. Positions asparagine 63–asparagine 310 constitute a Dynamin-type G domain. Residues glycine 68–serine 75 are G1 motif. Residue serine 72–serine 76 coordinates GDP. The G2 motif stretch occupies residues proline 93 to threonine 95. Positions aspartate 158–glycine 161 are G3 motif. Residues asparagine 216–aspartate 219 form a G4 motif region.

It belongs to the TRAFAC class dynamin-like GTPase superfamily. Dynamin/Fzo/YdjA family. Forms a 2:2 heterotetramer with DLP1. DLP2 forms a central back-to-back dimer flanked on each side by a DLP1 subunit. In the crystal structures the 2 DLP1 subunits are in very different conformations.

It is found in the cytoplasm. Its subcellular location is the cytosol. The catalysed reaction is GTP + H2O = GDP + phosphate + H(+). Functionally, the heterotetrameric DLP1(2)-DLP2(2) complex tethers liposomes and may mediate their fusion. Initial binding is probably mediated by DLP1, while DLP2 couples DLP1 subunits and increases the effective reach of the complex up to 45 nm. The role of the nucleotide is unknown. This subunit alone very weakly binds to liposomes; GTP, GDP, GMPPCP and GMPPNP do not change heterotetramer binding. Tetramerization is required for GTPase activity, suggesting the GTPase domains (dynamin-type G) from DLP1 and DLP2 must dimerize to reconstitute the GTPase active site. The chain is Dynamin-like protein 2 from Campylobacter jejuni subsp. jejuni serotype O:23/36 (strain 81-176).